Consider the following 698-residue polypeptide: Elongation factor G 1 (698 aa).

The tr-type G domain occupies 8–290; the sequence is ERYRNIGIVA…AVVDFLPAPI (283 aa). GTP contacts are provided by residues 17 to 24, 88 to 92, and 142 to 145; these read AHVDAGKT, DTPGH, and NKMD.

The protein belongs to the TRAFAC class translation factor GTPase superfamily. Classic translation factor GTPase family. EF-G/EF-2 subfamily.

The protein localises to the cytoplasm. Catalyzes the GTP-dependent ribosomal translocation step during translation elongation. During this step, the ribosome changes from the pre-translocational (PRE) to the post-translocational (POST) state as the newly formed A-site-bound peptidyl-tRNA and P-site-bound deacylated tRNA move to the P and E sites, respectively. Catalyzes the coordinated movement of the two tRNA molecules, the mRNA and conformational changes in the ribosome. The chain is Elongation factor G 1 from Shewanella frigidimarina (strain NCIMB 400).